The chain runs to 1042 residues: Isoleucine--tRNA ligase (1042 aa).

The 'HIGH' region signature appears at 59 to 69 (PFANGLPHYGH). Positions 619 to 623 (KMSKS) match the 'KMSKS' region motif. Residue Lys-622 coordinates ATP.

The protein belongs to the class-I aminoacyl-tRNA synthetase family. IleS type 2 subfamily. In terms of assembly, monomer. It depends on Zn(2+) as a cofactor.

The protein resides in the cytoplasm. The enzyme catalyses tRNA(Ile) + L-isoleucine + ATP = L-isoleucyl-tRNA(Ile) + AMP + diphosphate. Catalyzes the attachment of isoleucine to tRNA(Ile). As IleRS can inadvertently accommodate and process structurally similar amino acids such as valine, to avoid such errors it has two additional distinct tRNA(Ile)-dependent editing activities. One activity is designated as 'pretransfer' editing and involves the hydrolysis of activated Val-AMP. The other activity is designated 'posttransfer' editing and involves deacylation of mischarged Val-tRNA(Ile). This chain is Isoleucine--tRNA ligase, found in Nocardia farcinica (strain IFM 10152).